Here is a 244-residue protein sequence, read N- to C-terminus: Carboxy-S-adenosyl-L-methionine synthase (244 aa).

S-adenosyl-L-methionine-binding positions include Tyr-40, 65–67 (GCS), 90–91 (DN), 119–120 (DL), Asn-134, and Arg-201.

Belongs to the class I-like SAM-binding methyltransferase superfamily. Cx-SAM synthase family. As to quaternary structure, homodimer.

It catalyses the reaction prephenate + S-adenosyl-L-methionine = carboxy-S-adenosyl-L-methionine + 3-phenylpyruvate + H2O. Functionally, catalyzes the conversion of S-adenosyl-L-methionine (SAM) to carboxy-S-adenosyl-L-methionine (Cx-SAM). The polypeptide is Carboxy-S-adenosyl-L-methionine synthase (Geobacter metallireducens (strain ATCC 53774 / DSM 7210 / GS-15)).